The chain runs to 511 residues: Probable cytosol aminopeptidase (511 aa).

2 residues coordinate Mn(2+): Lys255 and Asp260. The active site involves Lys267. Positions 278, 337, and 339 each coordinate Mn(2+). Arg341 is a catalytic residue. Residues 485–511 (GAAQAVSPKKAARKEPGAAARKARSAQ) are disordered.

It belongs to the peptidase M17 family. Requires Mn(2+) as cofactor.

Its subcellular location is the cytoplasm. It carries out the reaction Release of an N-terminal amino acid, Xaa-|-Yaa-, in which Xaa is preferably Leu, but may be other amino acids including Pro although not Arg or Lys, and Yaa may be Pro. Amino acid amides and methyl esters are also readily hydrolyzed, but rates on arylamides are exceedingly low.. It catalyses the reaction Release of an N-terminal amino acid, preferentially leucine, but not glutamic or aspartic acids.. Presumably involved in the processing and regular turnover of intracellular proteins. Catalyzes the removal of unsubstituted N-terminal amino acids from various peptides. This chain is Probable cytosol aminopeptidase, found in Variovorax paradoxus (strain S110).